Consider the following 407-residue polypeptide: Chorismate synthase (407 aa).

NADP(+) is bound by residues Arg-43 and Arg-49. Residues Arg-143–Ser-145, Gln-264–Ala-265, Gly-308, Lys-323–Thr-327, and Arg-349 each bind FMN.

The protein belongs to the chorismate synthase family. Homotetramer. FMNH2 serves as cofactor.

It catalyses the reaction 5-O-(1-carboxyvinyl)-3-phosphoshikimate = chorismate + phosphate. It participates in metabolic intermediate biosynthesis; chorismate biosynthesis; chorismate from D-erythrose 4-phosphate and phosphoenolpyruvate: step 7/7. Functionally, catalyzes the anti-1,4-elimination of the C-3 phosphate and the C-6 proR hydrogen from 5-enolpyruvylshikimate-3-phosphate (EPSP) to yield chorismate, which is the branch point compound that serves as the starting substrate for the three terminal pathways of aromatic amino acid biosynthesis. This reaction introduces a second double bond into the aromatic ring system. This is Chorismate synthase from Corynebacterium efficiens (strain DSM 44549 / YS-314 / AJ 12310 / JCM 11189 / NBRC 100395).